A 352-amino-acid chain; its full sequence is Protein RecA (352 aa).

Glycine 67–threonine 74 serves as a coordination point for ATP. Residues valine 332–phenylalanine 352 are disordered. Residues alanine 335–phenylalanine 352 show a composition bias toward basic and acidic residues.

Belongs to the RecA family.

The protein localises to the cytoplasm. In terms of biological role, can catalyze the hydrolysis of ATP in the presence of single-stranded DNA, the ATP-dependent uptake of single-stranded DNA by duplex DNA, and the ATP-dependent hybridization of homologous single-stranded DNAs. It interacts with LexA causing its activation and leading to its autocatalytic cleavage. The polypeptide is Protein RecA (Pseudarthrobacter chlorophenolicus (strain ATCC 700700 / DSM 12829 / CIP 107037 / JCM 12360 / KCTC 9906 / NCIMB 13794 / A6) (Arthrobacter chlorophenolicus)).